The chain runs to 214 residues: Small ribosomal subunit protein uS2 (214 aa).

This sequence belongs to the universal ribosomal protein uS2 family.

The protein is Small ribosomal subunit protein uS2 of Methanococcoides burtonii (strain DSM 6242 / NBRC 107633 / OCM 468 / ACE-M).